Here is a 255-residue protein sequence, read N- to C-terminus: Hydroxyacylglutathione hydrolase (255 aa).

The Zn(2+) site is built by H56, H58, D60, H61, H114, D133, and H171.

Belongs to the metallo-beta-lactamase superfamily. Glyoxalase II family. As to quaternary structure, monomer. The cofactor is Zn(2+).

It carries out the reaction an S-(2-hydroxyacyl)glutathione + H2O = a 2-hydroxy carboxylate + glutathione + H(+). It functions in the pathway secondary metabolite metabolism; methylglyoxal degradation; (R)-lactate from methylglyoxal: step 2/2. Thiolesterase that catalyzes the hydrolysis of S-D-lactoyl-glutathione to form glutathione and D-lactic acid. This chain is Hydroxyacylglutathione hydrolase, found in Bradyrhizobium sp. (strain ORS 278).